We begin with the raw amino-acid sequence, 512 residues long: Methionine--tRNA ligase (512 aa).

Positions 12 to 22 (YYVNDVPHIGH) match the 'HIGH' region motif. The short motif at 295–299 (KISKS) is the 'KMSKS' region element. K298 provides a ligand contact to ATP.

Belongs to the class-I aminoacyl-tRNA synthetase family. MetG type 2B subfamily. As to quaternary structure, monomer.

The protein resides in the cytoplasm. It catalyses the reaction tRNA(Met) + L-methionine + ATP = L-methionyl-tRNA(Met) + AMP + diphosphate. In terms of biological role, is required not only for elongation of protein synthesis but also for the initiation of all mRNA translation through initiator tRNA(fMet) aminoacylation. This chain is Methionine--tRNA ligase, found in Rickettsia felis (strain ATCC VR-1525 / URRWXCal2) (Rickettsia azadi).